The sequence spans 122 residues: Large ribosomal subunit protein uL14 (122 aa).

It belongs to the universal ribosomal protein uL14 family. Part of the 50S ribosomal subunit. Forms a cluster with proteins L3 and L19. In the 70S ribosome, L14 and L19 interact and together make contacts with the 16S rRNA in bridges B5 and B8.

Functionally, binds to 23S rRNA. Forms part of two intersubunit bridges in the 70S ribosome. This chain is Large ribosomal subunit protein uL14, found in Campylobacter hominis (strain ATCC BAA-381 / DSM 21671 / CCUG 45161 / LMG 19568 / NCTC 13146 / CH001A).